Consider the following 415-residue polypeptide: Proline-serine-threonine phosphatase-interacting protein 1 (415 aa).

Positions 5 to 264 (LQFRDAFWCR…TLEGCDVEGD (260 aa)) constitute an F-BAR domain. Coiled coils occupy residues 94–133 (LALALREELRSLEEFRERQKEQRKKYEAIMDRVQKSKLSL) and 162–215 (SANG…TCEA). A Phosphoserine modification is found at S318. At Y344 the chain carries Phosphotyrosine; by ABL1. The SH3 domain maps to 358–415 (SSAQDYRALYDYTAQNSDELDISAGDILAVILEGEDGWWTVERNGQRGFVPGSYLEKL).

Homodimer. Homotrimer. Interacts (via coiled-coil domain) with CD2AP, PTPN12 and PTPN18. Interacts (via SH3 domain) with ABL1 and WAS. Interacts (via SH3 and coiled-coil domains) with MEFV (via B-box zinc finger); the interaction allows binding of MEFV to PYCARD and facilitates formation of PYCARD pyroptosomes. Interacts with DNM2 and FASLG. Interacts with CD2. In terms of processing, dephosphorylated on Tyr-344 by PTPN18, this event negatively regulates the association of PSTPIP1 with SH2 domain-containing proteins as tyrosine kinase. Phosphorylation of Tyr-344 is probably required for subsequent phosphorylation at other tyrosine residues. Phosphorylation is induced by activation of the EGFR and PDGFR in a ABL1 dependent manner. The phosphorylation regulates the interaction with WAS and with MEFV. Highly expressed in adult lung and spleen, and weakly expressed in testis, muscle, kidney, brain and heart. Highly expressed in spleen and thymus, moderately in lung, brain and muscle, and weakly expressed in heart and liver (at protein level).

It localises to the cytoplasm. The protein resides in the perinuclear region. The protein localises to the cell projection. Its subcellular location is the lamellipodium. It is found in the cleavage furrow. It localises to the cytoskeleton. The protein resides in the cell membrane. The protein localises to the uropodium. Functionally, involved in regulation of the actin cytoskeleton. May regulate WAS actin-bundling activity. Bridges the interaction between ABL1 and PTPN18 leading to ABL1 dephosphorylation. May play a role as a scaffold protein between PTPN12 and WAS and allow PTPN12 to dephosphorylate WAS. Has the potential to physically couple CD2 and CD2AP to WAS. Acts downstream of CD2 and CD2AP to recruit WAS to the T-cell:APC contact site so as to promote the actin polymerization required for synapse induction during T-cell activation. Down-regulates CD2-stimulated adhesion through the coupling of PTPN12 to CD2. Also has a role in innate immunity and the inflammatory response. Recruited to inflammasomes by MEFV. Induces formation of pyroptosomes, large supramolecular structures composed of oligomerized PYCARD dimers which form prior to inflammatory apoptosis. Binding to MEFV allows MEFV to bind to PYCARD and facilitates pyroptosome formation. Regulates endocytosis and cell migration in neutrophils. The sequence is that of Proline-serine-threonine phosphatase-interacting protein 1 (Pstpip1) from Mus musculus (Mouse).